Here is a 196-residue protein sequence, read N- to C-terminus: Chromophore lyase CpcT/CpeT (196 aa).

It belongs to the CpcT/CpeT biliprotein lyase family.

In terms of biological role, covalently attaches a chromophore to Cys residue(s) of phycobiliproteins. This chain is Chromophore lyase CpcT/CpeT, found in Thermosynechococcus vestitus (strain NIES-2133 / IAM M-273 / BP-1).